Reading from the N-terminus, the 467-residue chain is Xanthan biosynthesis protein XanB (467 aa).

Belongs to the mannose-6-phosphate isomerase type 2 family.

The enzyme catalyses D-mannose 6-phosphate = D-fructose 6-phosphate. It carries out the reaction alpha-D-mannose 1-phosphate + GTP + H(+) = GDP-alpha-D-mannose + diphosphate. The protein operates within nucleotide-sugar biosynthesis; GDP-alpha-D-mannose biosynthesis; GDP-alpha-D-mannose from alpha-D-mannose 1-phosphate (GTP route): step 1/1. It participates in nucleotide-sugar biosynthesis; GDP-alpha-D-mannose biosynthesis; alpha-D-mannose 1-phosphate from D-fructose 6-phosphate: step 1/2. Involved in xanthan production. This chain is Xanthan biosynthesis protein XanB (xanB), found in Xanthomonas campestris pv. campestris (strain ATCC 33913 / DSM 3586 / NCPPB 528 / LMG 568 / P 25).